The primary structure comprises 138 residues: Translation initiation factor IF-1, chloroplastic (138 aa).

A chloroplast-targeting transit peptide spans 1–53; the sequence is MFTSLHTPILHPRYCHHPTPSCTQFSPLALPPFHRTLSFLAPPPLLPAAPALS. The region spanning 58–133 is the S1-like domain; that stretch reads AKPDKSGEQK…SKGRIVYRLR (76 aa).

This sequence belongs to the IF-1 family. In terms of assembly, component of the 30S ribosomal translation pre-initiation complex which assembles on the 30S ribosome in the order IF-2 and IF-3, IF-1 and N-formylmethionyl-tRNA(fMet); mRNA recruitment can occur at any time during PIC assembly.

The protein localises to the plastid. It localises to the chloroplast. One of the essential components for the initiation of protein synthesis. Stabilizes the binding of IF-2 and IF-3 on the 30S subunit to which N-formylmethionyl-tRNA(fMet) subsequently binds. Helps modulate mRNA selection, yielding the 30S pre-initiation complex (PIC). Upon addition of the 50S ribosomal subunit IF-1, IF-2 and IF-3 are released leaving the mature 70S translation initiation complex. In Glycine max (Soybean), this protein is Translation initiation factor IF-1, chloroplastic (infA).